A 215-amino-acid chain; its full sequence is uncharacterized protein (215 aa).

This sequence to T.pallidum TP_0127, TP_0618 and TP_0619.

This is an uncharacterized protein from Treponema pallidum (strain Nichols).